Reading from the N-terminus, the 164-residue chain is MKARGRAWKYGDNIDTDVIIPARYLNTSDPKELAQHVLEDLDPEFRYKMKPGDIIVAGENFGCGSSREHAPLAIKAAGVSAVIAKSFARIFYRNAINIGLPILEAPEAVERIETGDEIEIDFSTGEIRNLTKGEVYHANPFPEFIMEIIKAGGLVEWAKRRLAK.

Belongs to the LeuD family. LeuD type 2 subfamily. As to quaternary structure, heterodimer of LeuC and LeuD.

The catalysed reaction is (2R,3S)-3-isopropylmalate = (2S)-2-isopropylmalate. The protein operates within amino-acid biosynthesis; L-leucine biosynthesis; L-leucine from 3-methyl-2-oxobutanoate: step 2/4. Catalyzes the isomerization between 2-isopropylmalate and 3-isopropylmalate, via the formation of 2-isopropylmaleate. This Pyrococcus furiosus (strain ATCC 43587 / DSM 3638 / JCM 8422 / Vc1) protein is 3-isopropylmalate dehydratase small subunit 1 (leuD1).